Here is a 274-residue protein sequence, read N- to C-terminus: Basic leucine zipper transcriptional factor ATF-like 2 (274 aa).

Disordered regions lie at residues 1-47, 128-151, and 187-229; these read MHLC…ALHQ, GSCYPAQPLSPGPQPHDSPSLLQC, and GSSS…PSSA. The bZIP domain occupies 17-80; the sequence is EQQRQLKKQK…AWWSRTLHVH (64 aa). The interval 20–41 is basic motif; that stretch reads RQLKKQKNRAAAQRSRQKHTDK. Residues 37–47 are compositionally biased toward basic and acidic residues; that stretch reads KHTDKADALHQ. The tract at residues 45-66 is leucine-zipper; it reads LHQQHESLEKDNLALRKEIQSL. Residues 187–196 show a composition bias toward low complexity; that stretch reads GSSSKLSALQ.

It belongs to the bZIP family. Heterodimer; heterodimerizes with JUN family proteins.

The protein resides in the nucleus. AP-1 family transcription factor that controls the differentiation of lineage-specific cells in the immune system. Following infection, participates in the differentiation of CD8(+) thymic conventional dendritic cells in the immune system. Acts via the formation of a heterodimer with JUN family proteins that recognizes and binds DNA sequence 5'-TGA[CG]TCA-3' and regulates expression of target genes. Selectively suppresses CCN1 transcription and hence blocks the downstream cell proliferation signals produced by CCN1 and inhibits CCN1-induced anchorage-independent growth and invasion in several cancer types, such as breast cancer, malignant glioma and metastatic melanoma. Possibly acts by interfering with AP-1 binding to CCN1 promoter. The sequence is that of Basic leucine zipper transcriptional factor ATF-like 2 (BATF2) from Homo sapiens (Human).